Consider the following 189-residue polypeptide: Peptidyl-tRNA hydrolase (189 aa).

Tyr-14 is a tRNA binding site. His-19 acts as the Proton acceptor in catalysis. 3 residues coordinate tRNA: Tyr-64, Asn-66, and Asn-112.

It belongs to the PTH family. Monomer.

It is found in the cytoplasm. It catalyses the reaction an N-acyl-L-alpha-aminoacyl-tRNA + H2O = an N-acyl-L-amino acid + a tRNA + H(+). Hydrolyzes ribosome-free peptidyl-tRNAs (with 1 or more amino acids incorporated), which drop off the ribosome during protein synthesis, or as a result of ribosome stalling. In terms of biological role, catalyzes the release of premature peptidyl moieties from peptidyl-tRNA molecules trapped in stalled 50S ribosomal subunits, and thus maintains levels of free tRNAs and 50S ribosomes. This is Peptidyl-tRNA hydrolase from Dehalococcoides mccartyi (strain ATCC BAA-2100 / JCM 16839 / KCTC 5957 / BAV1).